Reading from the N-terminus, the 412-residue chain is Multifunctional CCA protein (412 aa).

Positions 8 and 11 each coordinate ATP. Positions 8 and 11 each coordinate CTP. D21 and D23 together coordinate Mg(2+). ATP-binding residues include R91, R137, and R140. CTP-binding residues include R91, R137, and R140. Residues 228–329 (TGIHTLMTLS…VKLFDSIDAW (102 aa)) form the HD domain.

The protein belongs to the tRNA nucleotidyltransferase/poly(A) polymerase family. Bacterial CCA-adding enzyme type 1 subfamily. As to quaternary structure, monomer. Can also form homodimers and oligomers. Mg(2+) serves as cofactor. Requires Ni(2+) as cofactor.

It carries out the reaction a tRNA precursor + 2 CTP + ATP = a tRNA with a 3' CCA end + 3 diphosphate. It catalyses the reaction a tRNA with a 3' CCA end + 2 CTP + ATP = a tRNA with a 3' CCACCA end + 3 diphosphate. Functionally, catalyzes the addition and repair of the essential 3'-terminal CCA sequence in tRNAs without using a nucleic acid template. Adds these three nucleotides in the order of C, C, and A to the tRNA nucleotide-73, using CTP and ATP as substrates and producing inorganic pyrophosphate. tRNA 3'-terminal CCA addition is required both for tRNA processing and repair. Also involved in tRNA surveillance by mediating tandem CCA addition to generate a CCACCA at the 3' terminus of unstable tRNAs. While stable tRNAs receive only 3'-terminal CCA, unstable tRNAs are marked with CCACCA and rapidly degraded. In Escherichia coli O81 (strain ED1a), this protein is Multifunctional CCA protein.